The sequence spans 405 residues: Cytoplasmic 60S subunit biogenesis factor ZNF622 (405 aa).

2 consecutive U1-type zinc fingers follow at residues 4-28 (YTCITCRVAFKDADIQRAHYKTDWH) and 67-91 (TYCTVCSKRFSTFNAYENHLKSKKH). Residues 135–230 (AIRAQPSSSP…GVEEEEEKQA (96 aa)) form a disordered region. A compositionally biased stretch (acidic residues) spans 194-228 (AEEEEDSEEGWEEMDSDEDLGSEEEMEGVEEEEEK).

Belongs to the REI1 family. As to quaternary structure, homo- and heterodimer. Associates with pre-60S ribosomal particles. As to expression, mainly expressed in the ovary. Mainly expressed in the testis.

Its subcellular location is the cytoplasm. The protein resides in the nucleus. Pre-60S-associated cytoplasmic factor involved in the cytoplasmic maturation of the 60S subunit. The sequence is that of Cytoplasmic 60S subunit biogenesis factor ZNF622 (ZNF622) from Gallus gallus (Chicken).